Consider the following 351-residue polypeptide: Methylthioribose-1-phosphate isomerase (351 aa).

Substrate is bound by residues R51–A53, R94, and Q199. D240 functions as the Proton donor in the catalytic mechanism. A substrate-binding site is contributed by N250–K251.

This sequence belongs to the EIF-2B alpha/beta/delta subunits family. MtnA subfamily. In terms of assembly, homodimer.

It catalyses the reaction 5-(methylsulfanyl)-alpha-D-ribose 1-phosphate = 5-(methylsulfanyl)-D-ribulose 1-phosphate. It functions in the pathway amino-acid biosynthesis; L-methionine biosynthesis via salvage pathway; L-methionine from S-methyl-5-thio-alpha-D-ribose 1-phosphate: step 1/6. Catalyzes the interconversion of methylthioribose-1-phosphate (MTR-1-P) into methylthioribulose-1-phosphate (MTRu-1-P). The sequence is that of Methylthioribose-1-phosphate isomerase from Bacillus cereus (strain ZK / E33L).